The primary structure comprises 100 residues: MIITIEEEVYNNLKKRAEKEEISIPAIVRKFIVSYFNLEDSTKDYKRKEPGESVIIVNGKKYFRINCKMERQNELYIKSELKKKGISVNKLLKELIIVTV.

This is an uncharacterized protein from Acidianus filamentous virus 2 (isolate Italy/Pozzuoli) (AFV-2).